A 259-amino-acid chain; its full sequence is 3-deoxy-manno-octulosonate cytidylyltransferase (259 aa).

It belongs to the KdsB family.

It localises to the cytoplasm. The catalysed reaction is 3-deoxy-alpha-D-manno-oct-2-ulosonate + CTP = CMP-3-deoxy-beta-D-manno-octulosonate + diphosphate. The protein operates within nucleotide-sugar biosynthesis; CMP-3-deoxy-D-manno-octulosonate biosynthesis; CMP-3-deoxy-D-manno-octulosonate from 3-deoxy-D-manno-octulosonate and CTP: step 1/1. Its pathway is bacterial outer membrane biogenesis; lipopolysaccharide biosynthesis. Its function is as follows. Activates KDO (a required 8-carbon sugar) for incorporation into bacterial lipopolysaccharide in Gram-negative bacteria. In Xanthomonas oryzae pv. oryzae (strain KACC10331 / KXO85), this protein is 3-deoxy-manno-octulosonate cytidylyltransferase.